A 522-amino-acid chain; its full sequence is Pectinesterase/pectinesterase inhibitor PPE8B (522 aa).

The first 30 residues, 1 to 30 (MPYLLMASHNPLPAGKQLLLLVLLCAFFSS), serve as a signal peptide directing secretion. Positions 31–174 (SFIPFASCSI…TSLVQELLTQ (144 aa)) are pectinesterase inhibitor PPE8B. 6 N-linked (GlcNAc...) asparagine glycosylation sites follow: N105, N118, N119, N218, N221, and N274. A pectinesterase PPE8B region spans residues 208–506 (DAIVAQDGTG…YTVAQFIEGN (299 aa)). T283 and Q313 together coordinate substrate. D336 acts as the Proton donor; for pectinesterase activity in catalysis. An intrachain disulfide couples C350 to C370. Catalysis depends on D357, which acts as the Nucleophile; for pectinesterase activity. N405 carries N-linked (GlcNAc...) asparagine glycosylation. Substrate is bound by residues R426 and W428. N-linked (GlcNAc...) asparagine glycosylation is found at N489 and N496.

The protein in the N-terminal section; belongs to the PMEI family. In the C-terminal section; belongs to the pectinesterase family.

It localises to the secreted. It is found in the cell wall. The enzyme catalyses [(1-&gt;4)-alpha-D-galacturonosyl methyl ester](n) + n H2O = [(1-&gt;4)-alpha-D-galacturonosyl](n) + n methanol + n H(+). It functions in the pathway glycan metabolism; pectin degradation; 2-dehydro-3-deoxy-D-gluconate from pectin: step 1/5. Its function is as follows. May have roles in the deposition of pectin in developing tissues and in the wall loosening and cell separation that occurs in cell expansion, fruit ripening and abscission. The sequence is that of Pectinesterase/pectinesterase inhibitor PPE8B from Prunus persica (Peach).